The following is a 163-amino-acid chain: Small ribosomal subunit protein eS10A (163 aa).

The interval 92–163 (LTQTTRSNAV…GFGRASRYDN (72 aa)) is disordered. Residues 105-116 (GGPGGPGGGFGG) are compositionally biased toward gly residues.

This sequence belongs to the eukaryotic ribosomal protein eS10 family.

Its subcellular location is the cytoplasm. The polypeptide is Small ribosomal subunit protein eS10A (RpS10a) (Drosophila melanogaster (Fruit fly)).